The following is a 434-amino-acid chain: Glutamate-1-semialdehyde 2,1-aminomutase (434 aa).

An N6-(pyridoxal phosphate)lysine modification is found at Lys274.

This sequence belongs to the class-III pyridoxal-phosphate-dependent aminotransferase family. HemL subfamily. In terms of assembly, homodimer. Requires pyridoxal 5'-phosphate as cofactor.

The protein localises to the cytoplasm. It catalyses the reaction (S)-4-amino-5-oxopentanoate = 5-aminolevulinate. It participates in porphyrin-containing compound metabolism; protoporphyrin-IX biosynthesis; 5-aminolevulinate from L-glutamyl-tRNA(Glu): step 2/2. The chain is Glutamate-1-semialdehyde 2,1-aminomutase from Acidovorax sp. (strain JS42).